A 500-amino-acid chain; its full sequence is 4-aminobutyrate aminotransferase, mitochondrial (500 aa).

Residues 1-28 constitute a mitochondrion transit peptide; the sequence is MASMLLAQRLACSFQHSYRLLVPGSRHI. Position 163 (C163) interacts with [2Fe-2S] cluster. Position 164-165 (164-165) interacts with pyridoxal 5'-phosphate; the sequence is GS. C166 serves as a coordination point for [2Fe-2S] cluster. Residue R220 coordinates substrate. N6-succinyllysine is present on K231. K252 carries the post-translational modification N6-acetyllysine; alternate. N6-succinyllysine; alternate is present on K252. An N6-acetyllysine mark is found at K279 and K318. K357 carries the post-translational modification N6-(pyridoxal phosphate)lysine. T381 provides a ligand contact to pyridoxal 5'-phosphate. Position 413 is an N6-acetyllysine; alternate (K413). Position 413 is an N6-succinyllysine; alternate (K413). Residues K452 and K470 each carry the N6-acetyllysine modification.

The protein belongs to the class-III pyridoxal-phosphate-dependent aminotransferase family. In terms of assembly, homodimer; disulfide-linked. It depends on pyridoxal 5'-phosphate as a cofactor. [2Fe-2S] cluster is required as a cofactor. Liver &gt; pancreas &gt; brain &gt; kidney &gt; heart &gt; placenta.

Its subcellular location is the mitochondrion matrix. The catalysed reaction is 4-aminobutanoate + 2-oxoglutarate = succinate semialdehyde + L-glutamate. It catalyses the reaction (S)-3-amino-2-methylpropanoate + 2-oxoglutarate = 2-methyl-3-oxopropanoate + L-glutamate. Functionally, catalyzes the conversion of gamma-aminobutyrate and L-beta-aminoisobutyrate to succinate semialdehyde and methylmalonate semialdehyde, respectively. Can also convert delta-aminovalerate and beta-alanine. In Homo sapiens (Human), this protein is 4-aminobutyrate aminotransferase, mitochondrial.